Here is a 409-residue protein sequence, read N- to C-terminus: Argininosuccinate synthase (409 aa).

ATP-binding positions include alanine 11 to serine 19 and alanine 38. 2 residues coordinate L-citrulline: tyrosine 91 and serine 96. An ATP-binding site is contributed by glycine 121. L-aspartate is bound by residues threonine 123, asparagine 127, and aspartate 128. Asparagine 127 contacts L-citrulline. Arginine 131, serine 182, serine 191, glutamate 267, and tyrosine 279 together coordinate L-citrulline.

This sequence belongs to the argininosuccinate synthase family. Type 1 subfamily. In terms of assembly, homotetramer.

The protein localises to the cytoplasm. The enzyme catalyses L-citrulline + L-aspartate + ATP = 2-(N(omega)-L-arginino)succinate + AMP + diphosphate + H(+). It functions in the pathway amino-acid biosynthesis; L-arginine biosynthesis; L-arginine from L-ornithine and carbamoyl phosphate: step 2/3. This chain is Argininosuccinate synthase, found in Nitrobacter hamburgensis (strain DSM 10229 / NCIMB 13809 / X14).